We begin with the raw amino-acid sequence, 282 residues long: MEKRPYSVAWLSESSQRKPLCTNVDLLGYKSGNPDLPPNREYNVSLPSRVILPTPDYREKENYCGRNVHNGERSPPVRDQLHFHPAPQELTTSRRTSIEVSAESSTDQRVIGMTDTNKKTISVCDEDAASRARTKFTAEQLEELEKSFKENRYIGSSEKRRLSKVLKLSENQIKTWFQNRRMKFKRQTQDARVEAFFSGLYLPYYGYPDLPTPGYSVQSEFPVLAPQTMAASSIPFGPLHSTVMSPGLHPAIPSANLGSYPCSSMLVRPILNEPTRQRYSPY.

The homeobox DNA-binding region spans 129-188 (ASRARTKFTAEQLEELEKSFKENRYIGSSEKRRLSKVLKLSENQIKTWFQNRRMKFKRQT).

Its subcellular location is the nucleus. Functionally, transcriptional repressor. Acts in a ventral signaling pathway downstream of bmp4 to antagonize the Spemann organizer and ventrally pattern the embryonic mesoderm. Represses transcription of the dorsal genes gsc and otx2. The polypeptide is Homeobox protein vex1 (Xenopus tropicalis (Western clawed frog)).